Reading from the N-terminus, the 181-residue chain is Translation initiation factor IF-3 (181 aa).

The protein belongs to the IF-3 family. As to quaternary structure, monomer.

The protein localises to the cytoplasm. IF-3 binds to the 30S ribosomal subunit and shifts the equilibrium between 70S ribosomes and their 50S and 30S subunits in favor of the free subunits, thus enhancing the availability of 30S subunits on which protein synthesis initiation begins. This chain is Translation initiation factor IF-3, found in Idiomarina loihiensis (strain ATCC BAA-735 / DSM 15497 / L2-TR).